We begin with the raw amino-acid sequence, 220 residues long: Large ribosomal subunit protein uL16 (220 aa).

Belongs to the universal ribosomal protein uL16 family. Component of the large ribosomal subunit. Mature ribosomes consist of a small (40S) and a large (60S) subunit. The 40S subunit contains about 32 different proteins and 1 molecule of RNA (18S). The 60S subunit contains 45 different proteins and 3 molecules of RNA (25S, 5.8S and 5S).

It localises to the cytoplasm. In terms of biological role, component of the ribosome, a large ribonucleoprotein complex responsible for the synthesis of proteins in the cell. The small ribosomal subunit (SSU) binds messenger RNAs (mRNAs) and translates the encoded message by selecting cognate aminoacyl-transfer RNA (tRNA) molecules. The large subunit (LSU) contains the ribosomal catalytic site termed the peptidyl transferase center (PTC), which catalyzes the formation of peptide bonds, thereby polymerizing the amino acids delivered by tRNAs into a polypeptide chain. The nascent polypeptides leave the ribosome through a tunnel in the LSU and interact with protein factors that function in enzymatic processing, targeting, and the membrane insertion of nascent chains at the exit of the ribosomal tunnel. This is Large ribosomal subunit protein uL16 from Candida albicans (strain SC5314 / ATCC MYA-2876) (Yeast).